Reading from the N-terminus, the 224-residue chain is CRP-like cAMP-activated global transcriptional regulator (224 aa).

Residues 64–70 (GRENLLT), 79–82 (GELS), 89–90 (RT), 134–135 (TN), 142–143 (IF), and 178–188 (EEIAQLVGASR) contribute to the 3',5'-cyclic AMP site. Residues 144-217 (TDVPGRVAKQ…GKSVLISDSE (74 aa)) enclose the HTH crp-type domain. The segment at residues 177–196 (QEEIAQLVGASRETVNKALA) is a DNA-binding region (H-T-H motif).

Homodimer.

In terms of biological role, global transcriptional regulator that complexes with cAMP and binds to specific DNA promoter sites, causing DNA-bending, to regulate transcription. cAMP improves binding to specific DNA sequences, probably by altering protein conformation. Activates expression of whiB1. The sequence is that of CRP-like cAMP-activated global transcriptional regulator from Mycobacterium tuberculosis (strain CDC 1551 / Oshkosh).